The primary structure comprises 910 residues: Alanine--tRNA ligase (910 aa).

A compositionally biased stretch (basic and acidic residues) spans 488–505; that stretch reads RHEEKKEDSKSEKGENTA. Positions 488 to 507 are disordered; it reads RHEEKKEDSKSEKGENTAEK. 4 residues coordinate Zn(2+): His614, His618, Cys718, and His722.

This sequence belongs to the class-II aminoacyl-tRNA synthetase family. It depends on Zn(2+) as a cofactor.

It is found in the cytoplasm. The catalysed reaction is tRNA(Ala) + L-alanine + ATP = L-alanyl-tRNA(Ala) + AMP + diphosphate. Catalyzes the attachment of alanine to tRNA(Ala) in a two-step reaction: alanine is first activated by ATP to form Ala-AMP and then transferred to the acceptor end of tRNA(Ala). Also edits incorrectly charged Ser-tRNA(Ala) and Gly-tRNA(Ala) via its editing domain. The chain is Alanine--tRNA ligase from Methanococcus aeolicus (strain ATCC BAA-1280 / DSM 17508 / OCM 812 / Nankai-3).